An 88-amino-acid polypeptide reads, in one-letter code: UPF0335 protein M446_5200 (88 aa).

The protein belongs to the UPF0335 family.

The sequence is that of UPF0335 protein M446_5200 from Methylobacterium sp. (strain 4-46).